Reading from the N-terminus, the 508-residue chain is Dihydroniloticin synthase CYP71CD4 (508 aa).

The helical transmembrane segment at 6–26 threads the bilayer; it reads LDFFSVTSFIIFFLFLFRLVW. Position 449 (C449) interacts with heme.

This sequence belongs to the cytochrome P450 family. It depends on heme as a cofactor. In terms of tissue distribution, mainly expressed in roots and, to a lesser extent, in stems.

It localises to the membrane. It carries out the reaction tirucalla-7,24-dien-3beta-ol + 2 reduced [NADPH--hemoprotein reductase] + 2 O2 = dihydroniloticin + 2 oxidized [NADPH--hemoprotein reductase] + 2 H2O + 2 H(+). The protein operates within secondary metabolite biosynthesis; terpenoid biosynthesis. In terms of biological role, monooxygenase involved in the biosynthesis of quassinoids triterpene natural products such as ailanthone, chaparrinone, glaucarubinone and amarolide, allelopathic degraded triterpene lactones inhibiting the growth of other plants, and possessing antimalarial, antifeedant, insecticidal, anti-inflammatory and anticancer activities. Catalyzes the conversion of tirucalladienol to dihydroniloticin. This is Dihydroniloticin synthase CYP71CD4 from Ailanthus altissima (Tree-of-heaven).